Here is a 399-residue protein sequence, read N- to C-terminus: Protein translocase subunit SecD (399 aa).

Transmembrane regions (helical) follow at residues 7-27, 239-259, 262-282, 286-306, 329-351, and 357-381; these read IKTA…LTFP, VIGA…LGLV, IALL…NATL, GVAG…LIFA, ALRA…FYFG, and GFAV…RTLL.

This sequence belongs to the SecD/SecF family. SecD subfamily. Forms a complex with SecF. Part of the essential Sec protein translocation apparatus which comprises SecA, SecYEG and auxiliary proteins SecDF. Other proteins may also be involved.

The protein localises to the cell inner membrane. In terms of biological role, part of the Sec protein translocase complex. Interacts with the SecYEG preprotein conducting channel. SecDF uses the proton motive force (PMF) to complete protein translocation after the ATP-dependent function of SecA. This Dictyoglomus turgidum (strain DSM 6724 / Z-1310) protein is Protein translocase subunit SecD.